Consider the following 356-residue polypeptide: tRNA N6-adenosine threonylcarbamoyltransferase (356 aa).

2 residues coordinate Fe cation: H115 and H119. Substrate contacts are provided by residues 138–142 (LVSGG), D171, G184, and N283. Position 311 (D311) interacts with Fe cation.

Belongs to the KAE1 / TsaD family. Fe(2+) is required as a cofactor.

It localises to the cytoplasm. It carries out the reaction L-threonylcarbamoyladenylate + adenosine(37) in tRNA = N(6)-L-threonylcarbamoyladenosine(37) in tRNA + AMP + H(+). In terms of biological role, required for the formation of a threonylcarbamoyl group on adenosine at position 37 (t(6)A37) in tRNAs that read codons beginning with adenine. Is involved in the transfer of the threonylcarbamoyl moiety of threonylcarbamoyl-AMP (TC-AMP) to the N6 group of A37, together with TsaE and TsaB. TsaD likely plays a direct catalytic role in this reaction. In Prochlorococcus marinus (strain MIT 9215), this protein is tRNA N6-adenosine threonylcarbamoyltransferase.